A 326-amino-acid polypeptide reads, in one-letter code: Small ribosomal subunit protein RACK1x (326 aa).

7 WD repeats span residues 13–53 (AHTD…KSYG), 61–100 (GHSH…TTRR), 103–142 (GHTK…KYTI), 147–188 (GHKE…LRNS), 191–230 (GHSG…KLYS), 232–270 (EAGS…VVED), and 290–326 (NQKK…IGRY).

The protein belongs to the WD repeat G protein beta family. Ribosomal protein RACK1 subfamily. In terms of assembly, homodimer and heterodimer with RACK1A or RACK1B. Interacts with GB1, MEKK1, MKK4, MKK5, MPK3 and MPK6, but not with GPA1 or MPK4. In terms of tissue distribution, widely expressed.

Minor component of the RACK1 regulatory proteins that play a role in multiple signal transduction pathways. Involved in multiple hormone responses and developmental processes. MAPK cascade scaffolding protein involved in the protease IV and ArgC signaling pathway but not the flg22 pathway. This Arabidopsis thaliana (Mouse-ear cress) protein is Small ribosomal subunit protein RACK1x.